The following is a 173-amino-acid chain: Cytochrome c-type biogenesis protein CcmE (173 aa).

Over Met1–Arg8 the chain is Cytoplasmic. A helical; Signal-anchor for type II membrane protein membrane pass occupies residues Phe9–Ala29. Topologically, residues Leu30–Lys173 are periplasmic. Positions 131 and 135 each coordinate heme. The segment at Gly152–Lys173 is disordered. Basic and acidic residues predominate over residues Ala156–Lys173.

This sequence belongs to the CcmE/CycJ family.

The protein localises to the cell inner membrane. Its function is as follows. Heme chaperone required for the biogenesis of c-type cytochromes. Transiently binds heme delivered by CcmC and transfers the heme to apo-cytochromes in a process facilitated by CcmF and CcmH. This chain is Cytochrome c-type biogenesis protein CcmE, found in Haemophilus influenzae (strain PittEE).